Consider the following 95-residue polypeptide: Protein TusB (95 aa).

It belongs to the DsrH/TusB family. As to quaternary structure, heterohexamer, formed by a dimer of trimers. The hexameric TusBCD complex contains 2 copies each of TusB, TusC and TusD. The TusBCD complex interacts with TusE.

The protein resides in the cytoplasm. In terms of biological role, part of a sulfur-relay system required for 2-thiolation of 5-methylaminomethyl-2-thiouridine (mnm(5)s(2)U) at tRNA wobble positions. This Photorhabdus laumondii subsp. laumondii (strain DSM 15139 / CIP 105565 / TT01) (Photorhabdus luminescens subsp. laumondii) protein is Protein TusB.